We begin with the raw amino-acid sequence, 291 residues long: Omega-amidase NIT3 (291 aa).

The region spanning 11–264 (IKVALVQLSG…EEIIYAELDP (254 aa)) is the CN hydrolase domain. Phosphothreonine is present on T34. Residue E53 is the Proton acceptor of the active site. Residue K128 is the Proton donor of the active site. Residue C169 is the Nucleophile of the active site.

It belongs to the carbon-nitrogen hydrolase superfamily. NIT1/NIT2 family. In terms of assembly, homodimer.

It carries out the reaction a monoamide of a dicarboxylate + H2O = a dicarboxylate + NH4(+). Its function is as follows. Possesses omega-amidase activity. The role of omega-amidase is to remove potentially toxic intermediates by converting 2-oxoglutaramate and 2-oxosuccinamate to biologically useful 2-oxoglutarate and oxaloacetate, respectively. The protein is Omega-amidase NIT3 (NIT3) of Saccharomyces cerevisiae (strain ATCC 204508 / S288c) (Baker's yeast).